Reading from the N-terminus, the 248-residue chain is Chitin deacetylase (248 aa).

The first 26 residues, 1 to 26 (MHFSTLFGAAATAALAGSTNASPLAR), serve as a signal peptide directing secretion. 2 disulfide bridges follow: C38–C237 and C148–C152. The NodB homology domain maps to 42 to 232 (GLVALTYDDG…TLKSKGYRAV (191 aa)). Residue D49 is the Proton acceptor of the active site. D49 contacts acetate. Residues D50, H104, and H108 each contribute to the Co(2+) site. Acetate is bound at residue Y145. The Proton donor role is filled by H206.

This sequence belongs to the polysaccharide deacetylase family. Monomer. Requires Co(2+) as cofactor. N-glycosylated.

Its subcellular location is the secreted. The enzyme catalyses [(1-&gt;4)-N-acetyl-beta-D-glucosaminyl](n) + n H2O = chitosan + n acetate. In terms of biological role, hydrolyzes the N-acetamido groups of N-acetyl-D-glucosamine polymers in chitin to form chitosan and acetate. May play a role in evasion of the host immune response; plant chitinases liberate chitin molecules from the fungal cell wall which act as elicitors of the plant immune response, deacetylation of the liberated chitin neutralizes elicitor activity. The protein is Chitin deacetylase of Colletotrichum lindemuthianum (Bean anthracnose fungus).